The chain runs to 350 residues: Protein MENT (350 aa).

Positions 1-23 are cleaved as a signal peptide; that stretch reads MVPAACMLLWALLLSLEYRAAGA.

In terms of processing, phosphorylation sites are present in the extracellular medium. High expression in testis, but low in other tissues.

The protein resides in the secreted. Involved in control of cellular proliferation. Onconcogenic modifier contributing to the tumor suppressor function of DNMT3B. This Mus musculus (Mouse) protein is Protein MENT (Ment).